The following is a 376-amino-acid chain: Protein FhaE (376 aa).

A signal peptide spans 1–37; the sequence is MSQIFADRRAAVPARVISFCGAALAVWAGLAVQPAMA.

The protein is Protein FhaE (fhaE) of Bordetella pertussis (strain Tohama I / ATCC BAA-589 / NCTC 13251).